The chain runs to 165 residues: GTP-dependent dephospho-CoA kinase (165 aa).

6 residues coordinate GTP: Asp44, Val45, Asp63, Lys65, Glu115, and Asp138.

Belongs to the GTP-dependent DPCK family.

It carries out the reaction 3'-dephospho-CoA + GTP = GDP + CoA + H(+). The protein operates within cofactor biosynthesis; coenzyme A biosynthesis. Its function is as follows. Catalyzes the GTP-dependent phosphorylation of the 3'-hydroxyl group of dephosphocoenzyme A to form coenzyme A (CoA). The chain is GTP-dependent dephospho-CoA kinase from Picrophilus torridus (strain ATCC 700027 / DSM 9790 / JCM 10055 / NBRC 100828 / KAW 2/3).